Here is a 527-residue protein sequence, read N- to C-terminus: Monooxygenase aurF (527 aa).

The N-terminal stretch at 1–19 (MPNPTVAIVGLGALGLVTL) is a signal peptide. The N-linked (GlcNAc...) asparagine glycan is linked to Asn-59.

This sequence belongs to the FMO family. As to quaternary structure, might be part of an extracellular enzyme complex composed of GIP1, aurF, aurO and aurS. Requires FAD as cofactor.

It localises to the secreted. Its subcellular location is the extracellular space. The protein operates within pigment biosynthesis. In terms of biological role, monooxygenase; part of the gene cluster that mediates the biosynthesis of aurofusarin, a red mycelium pigment which is acting as a mycotoxin. The first step is performed by the polyketide synthase which condenses one acetyl-CoA and 6 malonyl-CoA units to form the first intermediate, the cyclic heptaketide and yellow pigment YWA1. The C2 hydroxyl group in the pyrone ring of YWA1 is probably formed during ring closure by an aldol-type cyclization reaction. The dehydratase aurZ then acts as the first tailoring enzyme in the aurofusarin biosynthetic pathway by converting YWA1 to nor-rubrofusarin. Nor-rubrofusarin is then methylated to rubrofusarin by the O-methyltransferase aurJ. Rubrofusarin is then transported across the plasma membrane by the rubrofusarin-specific pump aurT for further enzymatic processing by the extracellular complex composed of GIP1, aurF, aurO and aurS to yield aurofusarin. The protein is Monooxygenase aurF of Gibberella zeae (strain ATCC MYA-4620 / CBS 123657 / FGSC 9075 / NRRL 31084 / PH-1) (Wheat head blight fungus).